Reading from the N-terminus, the 30-residue chain is Vitri peptide A (30 aa).

Residues 1-30 (GIPCGESCVWIPCITSAIGCSCKSKVCYRN) constitute a cross-link (cyclopeptide (Gly-Asn)). Disulfide bonds link cysteine 4–cysteine 20, cysteine 8–cysteine 22, and cysteine 13–cysteine 27.

This is a cyclic peptide.

Its function is as follows. Probably participates in a plant defense mechanism. Has strong cytotoxic activity against human lymphoma U-937 GTB and human myeloma RPMI-8226/s cell lines. The polypeptide is Vitri peptide A (Viola arvensis (European field pansy)).